The primary structure comprises 221 residues: Early nodulin-like protein 4 (221 aa).

The first 21 residues, 1–21 (MVFVKMTDVYLMIVMLMGLGF), serve as a signal peptide directing secretion. Residues 29–130 (HKFYVGGRDG…GQKLAVTVMS (102 aa)) enclose the Phytocyanin domain. Residues asparagine 59 and asparagine 85 are each glycosylated (N-linked (GlcNAc...) asparagine). Cysteine 84 and cysteine 118 are joined by a disulfide. The tract at residues 130 to 185 (STGHHSHTPRHPSPSPSPSASPVRKALLSPAPIPVHKALSSPAPTPGVDPSHSEVL) is disordered. Asparagine 197 carries the GPI-anchor amidated asparagine lipid modification. Positions 198–221 (LAGSVAPGVISLGLVLVIMISSMV) are cleaved as a propeptide — removed in mature form.

This sequence belongs to the early nodulin-like (ENODL) family. Confined to flowers.

It localises to the cell membrane. In terms of biological role, may act as a carbohydrate transporter. In Arabidopsis thaliana (Mouse-ear cress), this protein is Early nodulin-like protein 4.